The sequence spans 130 residues: Small ribosomal subunit protein uS9 (130 aa).

This sequence belongs to the universal ribosomal protein uS9 family.

This chain is Small ribosomal subunit protein uS9, found in Shewanella piezotolerans (strain WP3 / JCM 13877).